A 452-amino-acid polypeptide reads, in one-letter code: Tubulin beta-2 chain (452 aa).

Positions 11, 72, 141, 145, 146, 147, 207, and 229 each coordinate GTP. Residue E72 participates in Mg(2+) binding. The disordered stretch occupies residues 414 to 452 (AESNMNDPVAEYQQYQDATADDEEEYDDEAADDHHQYES). Acidic residues predominate over residues 432–444 (TADDEEEYDDEAA).

The protein belongs to the tubulin family. In terms of assembly, dimer of alpha and beta chains. A typical microtubule is a hollow water-filled tube with an outer diameter of 25 nm and an inner diameter of 15 nM. Alpha-beta heterodimers associate head-to-tail to form protofilaments running lengthwise along the microtubule wall with the beta-tubulin subunit facing the microtubule plus end conferring a structural polarity. Microtubules usually have 13 protofilaments but different protofilament numbers can be found in some organisms and specialized cells. Requires Mg(2+) as cofactor.

Its subcellular location is the cytoplasm. The protein localises to the cytoskeleton. Its function is as follows. Tubulin is the major constituent of microtubules, a cylinder consisting of laterally associated linear protofilaments composed of alpha- and beta-tubulin heterodimers. Microtubules grow by the addition of GTP-tubulin dimers to the microtubule end, where a stabilizing cap forms. Below the cap, tubulin dimers are in GDP-bound state, owing to GTPase activity of alpha-tubulin. The chain is Tubulin beta-2 chain (TUBB2) from Solanum tuberosum (Potato).